The chain runs to 592 residues: Aspartate--tRNA ligase (592 aa).

E171 serves as a coordination point for L-aspartate. An aspartate region spans residues 195–198 (QLFK). Residue R217 coordinates L-aspartate. ATP-binding positions include 217–219 (RDE) and Q226. Position 448 (H448) interacts with L-aspartate. Position 482 (E482) interacts with ATP. L-aspartate is bound at residue R489. 534 to 537 (GLDR) lines the ATP pocket.

Belongs to the class-II aminoacyl-tRNA synthetase family. Type 1 subfamily. In terms of assembly, homodimer.

It is found in the cytoplasm. The catalysed reaction is tRNA(Asp) + L-aspartate + ATP = L-aspartyl-tRNA(Asp) + AMP + diphosphate. Functionally, catalyzes the attachment of L-aspartate to tRNA(Asp) in a two-step reaction: L-aspartate is first activated by ATP to form Asp-AMP and then transferred to the acceptor end of tRNA(Asp). This chain is Aspartate--tRNA ligase, found in Vibrio vulnificus (strain YJ016).